Consider the following 449-residue polypeptide: Probable rhamnogalacturonase E (449 aa).

The N-terminal stretch at 1-21 is a signal peptide; it reads MRSKTFSVLSSCLLLIATVQG. An intrachain disulfide couples C42 to C68. N-linked (GlcNAc...) asparagine glycosylation is found at N53, N91, and N106. The active-site Proton donor is the D221. The cysteines at positions 223 and 240 are disulfide-linked. N-linked (GlcNAc...) asparagine glycans are attached at residues N241 and N256. H296 is a catalytic residue. A glycan (N-linked (GlcNAc...) asparagine) is linked at N323. Intrachain disulfides connect C346–C352 and C374–C383.

Belongs to the glycosyl hydrolase 28 family.

It localises to the secreted. It carries out the reaction Endohydrolysis of alpha-D-GalA-(1-&gt;2)-alpha-L-Rha glycosidic bond in the rhamnogalacturonan I backbone with initial inversion of anomeric configuration releasing oligosaccharides with beta-D-GalA at the reducing end.. Its function is as follows. Pectinolytic enzymes consist of four classes of enzymes: pectine lyase, polygalacturonase, pectin methylesterase and rhamnogalacturonase. Hydrolyzes alpha-D-galacturonopyranosyl-(1,2)-alpha-L-rhamnopyranosyl linkages in the backbone of the hairy regions of pectins. The sequence is that of Probable rhamnogalacturonase E (rhgE) from Aspergillus flavus (strain ATCC 200026 / FGSC A1120 / IAM 13836 / NRRL 3357 / JCM 12722 / SRRC 167).